The chain runs to 236 residues: Uridylate kinase (236 aa).

Lys-12–Gly-15 is a binding site for ATP. The segment at Gly-20–Gly-25 is involved in allosteric activation by GTP. Residue Gly-54 participates in UMP binding. ATP contacts are provided by Gly-55 and Arg-59. UMP contacts are provided by residues Asp-72 and Thr-133–Thr-140. Residues Asn-161, Tyr-166, and Asp-169 each coordinate ATP.

Belongs to the UMP kinase family. Homohexamer.

It is found in the cytoplasm. It catalyses the reaction UMP + ATP = UDP + ADP. Its pathway is pyrimidine metabolism; CTP biosynthesis via de novo pathway; UDP from UMP (UMPK route): step 1/1. Its activity is regulated as follows. Allosterically activated by GTP. Inhibited by UTP. Catalyzes the reversible phosphorylation of UMP to UDP. This chain is Uridylate kinase, found in Alkaliphilus oremlandii (strain OhILAs) (Clostridium oremlandii (strain OhILAs)).